The primary structure comprises 259 residues: Phosphate import ATP-binding protein PstB 1 (259 aa).

The 242-residue stretch at 13–254 (IQVRGLEFFY…PSKTQTEDYI (242 aa)) folds into the ABC transporter domain. An ATP-binding site is contributed by 45–52 (GPSGCGKS).

Belongs to the ABC transporter superfamily. Phosphate importer (TC 3.A.1.7) family. As to quaternary structure, the complex is composed of two ATP-binding proteins (PstB), two transmembrane proteins (PstC and PstA) and a solute-binding protein (PstS).

It localises to the cell inner membrane. The enzyme catalyses phosphate(out) + ATP + H2O = ADP + 2 phosphate(in) + H(+). In terms of biological role, part of the ABC transporter complex PstSACB involved in phosphate import. Responsible for energy coupling to the transport system. This chain is Phosphate import ATP-binding protein PstB 1, found in Pseudomonas savastanoi pv. phaseolicola (strain 1448A / Race 6) (Pseudomonas syringae pv. phaseolicola (strain 1448A / Race 6)).